The following is a 167-amino-acid chain: MAEHQVNYASGLPVVLTSVDKLVQWGRSNSLWALSYGLACCAIEMMAAGGSRYDFDRFGTIFRASPRHSEVMIIAGTLCKKHAEFTRRLYDQMPDPKWVISMGSCANTGGMFNTYSTVQGVDRIIPVDIYVPGCAPRPESFQFALMILQKKIRKEKASRKIAPKRLI.

Positions 40, 41, 105, and 134 each coordinate [4Fe-4S] cluster.

This sequence belongs to the complex I 20 kDa subunit family. As to quaternary structure, NDH-1 is composed of 14 different subunits. Subunits NuoB, C, D, E, F, and G constitute the peripheral sector of the complex. [4Fe-4S] cluster is required as a cofactor.

Its subcellular location is the cell inner membrane. It carries out the reaction a quinone + NADH + 5 H(+)(in) = a quinol + NAD(+) + 4 H(+)(out). NDH-1 shuttles electrons from NADH, via FMN and iron-sulfur (Fe-S) centers, to quinones in the respiratory chain. The immediate electron acceptor for the enzyme in this species is believed to be ubiquinone. Couples the redox reaction to proton translocation (for every two electrons transferred, four hydrogen ions are translocated across the cytoplasmic membrane), and thus conserves the redox energy in a proton gradient. This is NADH-quinone oxidoreductase subunit B from Campylobacter jejuni subsp. jejuni serotype O:2 (strain ATCC 700819 / NCTC 11168).